The following is a 150-amino-acid chain: Meiotic expression up-regulated protein 15 (150 aa).

In Schizosaccharomyces pombe (strain 972 / ATCC 24843) (Fission yeast), this protein is Meiotic expression up-regulated protein 15 (meu15).